A 296-amino-acid polypeptide reads, in one-letter code: Mycothiol acetyltransferase (296 aa).

N-acetyltransferase domains lie at 17 to 146 (YNHR…AVYD) and 156 to 296 (LKTA…VYEK). E44 provides a ligand contact to 1D-myo-inositol 2-(L-cysteinylamino)-2-deoxy-alpha-D-glucopyranoside. Residue 81–83 (LAV) coordinates acetyl-CoA. The 1D-myo-inositol 2-(L-cysteinylamino)-2-deoxy-alpha-D-glucopyranoside site is built by E183, K222, and E230. Acetyl-CoA is bound by residues 234 to 236 (VGL) and 241 to 247 (RGKGLGD). Residue Y268 participates in 1D-myo-inositol 2-(L-cysteinylamino)-2-deoxy-alpha-D-glucopyranoside binding.

The protein belongs to the acetyltransferase family. MshD subfamily. In terms of assembly, monomer.

It carries out the reaction 1D-myo-inositol 2-(L-cysteinylamino)-2-deoxy-alpha-D-glucopyranoside + acetyl-CoA = mycothiol + CoA + H(+). In terms of biological role, catalyzes the transfer of acetyl from acetyl-CoA to desacetylmycothiol (Cys-GlcN-Ins) to form mycothiol. This chain is Mycothiol acetyltransferase, found in Corynebacterium efficiens (strain DSM 44549 / YS-314 / AJ 12310 / JCM 11189 / NBRC 100395).